We begin with the raw amino-acid sequence, 197 residues long: ATP-dependent Clp protease proteolytic subunit 2 (197 aa).

The active-site Nucleophile is the Ser101. His126 is an active-site residue.

It belongs to the peptidase S14 family. Fourteen ClpP subunits assemble into 2 heptameric rings which stack back to back to give a disk-like structure with a central cavity, resembling the structure of eukaryotic proteasomes.

It localises to the cytoplasm. The enzyme catalyses Hydrolysis of proteins to small peptides in the presence of ATP and magnesium. alpha-casein is the usual test substrate. In the absence of ATP, only oligopeptides shorter than five residues are hydrolyzed (such as succinyl-Leu-Tyr-|-NHMec, and Leu-Tyr-Leu-|-Tyr-Trp, in which cleavage of the -Tyr-|-Leu- and -Tyr-|-Trp bonds also occurs).. Its function is as follows. Cleaves peptides in various proteins in a process that requires ATP hydrolysis. Has a chymotrypsin-like activity. Plays a major role in the degradation of misfolded proteins. This is ATP-dependent Clp protease proteolytic subunit 2 from Trichormus variabilis (strain ATCC 29413 / PCC 7937) (Anabaena variabilis).